Consider the following 292-residue polypeptide: Protease HtpX (292 aa).

The next 2 membrane-spanning stretches (helical) occupy residues 5 to 25 (IFLF…VMSL) and 34 to 54 (SGLL…SLLL). His140 is a Zn(2+) binding site. The active site involves Glu141. His144 serves as a coordination point for Zn(2+). The next 2 membrane-spanning stretches (helical) occupy residues 155–175 (LLQG…GGII) and 193–213 (IIVF…AMWF). Glu218 serves as a coordination point for Zn(2+).

The protein belongs to the peptidase M48B family. Zn(2+) is required as a cofactor.

It localises to the cell inner membrane. This is Protease HtpX from Xanthomonas euvesicatoria pv. vesicatoria (strain 85-10) (Xanthomonas campestris pv. vesicatoria).